Here is a 446-residue protein sequence, read N- to C-terminus: Mycosin-1 (446 aa).

An N-terminal signal peptide occupies residues Met1 to Ala21. The tract at residues Pro24–Thr43 is disordered. The Peptidase S8 domain maps to Pro64–Leu387. Residues Asp90, His121, and Ser332 each act as charge relay system in the active site. The helical transmembrane segment at Ile419–Ala439 threads the bilayer.

The protein belongs to the peptidase S8 family.

Its subcellular location is the cell membrane. In terms of biological role, may play a dual role in regulation of ESX-1 secretion and virulence. Acts as a protease that cleaves EspB. Essential for ESX-1 function, required for early replication in macrophages and full virulence in mice. The polypeptide is Mycosin-1 (Mycobacterium tuberculosis (strain ATCC 25618 / H37Rv)).